The sequence spans 459 residues: Bifunctional protein GlmU (459 aa).

Residues 1 to 229 (MSNYAIILAA…FDESLGVNDR (229 aa)) form a pyrophosphorylase region. UDP-N-acetyl-alpha-D-glucosamine is bound by residues 8-11 (LAAG), lysine 22, glutamine 72, and 77-78 (GT). Aspartate 102 is a binding site for Mg(2+). Positions 139, 154, 169, and 227 each coordinate UDP-N-acetyl-alpha-D-glucosamine. Asparagine 227 provides a ligand contact to Mg(2+). The linker stretch occupies residues 230-250 (VALATAEKVMRHRIARQHMVN). Residues 251–459 (GVTVVNPDSA…NKKPHHPSQK (209 aa)) form an N-acetyltransferase region. UDP-N-acetyl-alpha-D-glucosamine-binding residues include arginine 332 and lysine 350. Residue histidine 362 is the Proton acceptor of the active site. Residues tyrosine 365 and asparagine 376 each coordinate UDP-N-acetyl-alpha-D-glucosamine. Residues alanine 379, 385–386 (NY), serine 404, alanine 422, and arginine 439 each bind acetyl-CoA.

In the N-terminal section; belongs to the N-acetylglucosamine-1-phosphate uridyltransferase family. It in the C-terminal section; belongs to the transferase hexapeptide repeat family. Homotrimer. It depends on Mg(2+) as a cofactor.

Its subcellular location is the cytoplasm. It catalyses the reaction alpha-D-glucosamine 1-phosphate + acetyl-CoA = N-acetyl-alpha-D-glucosamine 1-phosphate + CoA + H(+). The enzyme catalyses N-acetyl-alpha-D-glucosamine 1-phosphate + UTP + H(+) = UDP-N-acetyl-alpha-D-glucosamine + diphosphate. It participates in nucleotide-sugar biosynthesis; UDP-N-acetyl-alpha-D-glucosamine biosynthesis; N-acetyl-alpha-D-glucosamine 1-phosphate from alpha-D-glucosamine 6-phosphate (route II): step 2/2. Its pathway is nucleotide-sugar biosynthesis; UDP-N-acetyl-alpha-D-glucosamine biosynthesis; UDP-N-acetyl-alpha-D-glucosamine from N-acetyl-alpha-D-glucosamine 1-phosphate: step 1/1. It functions in the pathway bacterial outer membrane biogenesis; LPS lipid A biosynthesis. Functionally, catalyzes the last two sequential reactions in the de novo biosynthetic pathway for UDP-N-acetylglucosamine (UDP-GlcNAc). The C-terminal domain catalyzes the transfer of acetyl group from acetyl coenzyme A to glucosamine-1-phosphate (GlcN-1-P) to produce N-acetylglucosamine-1-phosphate (GlcNAc-1-P), which is converted into UDP-GlcNAc by the transfer of uridine 5-monophosphate (from uridine 5-triphosphate), a reaction catalyzed by the N-terminal domain. In Streptococcus agalactiae serotype V (strain ATCC BAA-611 / 2603 V/R), this protein is Bifunctional protein GlmU.